The following is a 2599-amino-acid chain: Protein DOP1 homolog (2599 aa).

Disordered regions lie at residues 532 to 571 and 595 to 701; these read EQSGGSSSDEKITMNSASDAGKTEAGAQGNSLEKSKSDSR and ASNQ…LDEE. 3 stretches are compositionally biased toward polar residues: residues 534 to 549, 595 to 604, and 625 to 636; these read SGGSSSDEKITMNSAS, ASNQSVGRQS, and ASDTGQQSSSDL. Ser753 is modified (phosphoserine). A compositionally biased stretch (basic and acidic residues) spans 1240 to 1251; that stretch reads PRIEIPHKETPL. 2 disordered regions span residues 1240–1316 and 1347–1368; these read PRIE…SSSA and TYRLTREKTPGENSLNSLEQKD. Polar residues predominate over residues 1264–1282; the sequence is QPSQEQPANQPDNSLQYDQ. The segment covering 1297–1309 has biased composition (basic and acidic residues); the sequence is SELRETSIEKEDS. A Phosphothreonine modification is found at Thr1355. Phosphoserine occurs at positions 1360, 1363, and 1371. The segment at 1409–1442 is disordered; the sequence is CISKTSTDSNISGSHVEQPEQEEETEPGTESTIN. Residues 1410–1423 are compositionally biased toward polar residues; sequence ISKTSTDSNISGSH. Ser2525 is subject to Phosphoserine.

This sequence belongs to the DOP1 family.

The protein resides in the golgi apparatus membrane. Functionally, may be involved in protein traffic between late Golgi and early endosomes. The sequence is that of Protein DOP1 homolog from Drosophila melanogaster (Fruit fly).